A 1073-amino-acid chain; its full sequence is ATP-dependent helicase/deoxyribonuclease subunit B (1073 aa).

This sequence belongs to the helicase family. AddB/RexB type 2 subfamily. Heterodimer of AddA and RexB. Requires Mg(2+) as cofactor.

Its function is as follows. The heterodimer acts as both an ATP-dependent DNA helicase and an ATP-dependent, dual-direction single-stranded exonuclease. Recognizes the chi site generating a DNA molecule suitable for the initiation of homologous recombination. This subunit has 5' -&gt; 3' nuclease activity but not helicase activity. This Streptococcus equi subsp. zooepidemicus (strain MGCS10565) protein is ATP-dependent helicase/deoxyribonuclease subunit B.